Reading from the N-terminus, the 384-residue chain is Spermidine/putrescine import ATP-binding protein PotA (384 aa).

The ABC transporter domain occupies isoleucine 6–isoleucine 238. Position 40 to 47 (glycine 40 to serine 47) interacts with ATP.

The protein belongs to the ABC transporter superfamily. Spermidine/putrescine importer (TC 3.A.1.11.1) family. In terms of assembly, the complex is composed of two ATP-binding proteins (PotA), two transmembrane proteins (PotB and PotC) and a solute-binding protein (PotD).

The protein resides in the cell membrane. It carries out the reaction ATP + H2O + polyamine-[polyamine-binding protein]Side 1 = ADP + phosphate + polyamineSide 2 + [polyamine-binding protein]Side 1.. Functionally, part of the ABC transporter complex PotABCD involved in spermidine/putrescine import. Responsible for energy coupling to the transport system. The chain is Spermidine/putrescine import ATP-binding protein PotA from Streptococcus pyogenes serotype M12 (strain MGAS2096).